The sequence spans 487 residues: 7-deoxyloganetin glucosyltransferase (487 aa).

The Proton acceptor role is filled by His-25. An an anthocyanidin-binding site is contributed by His-25. Asp-129 functions as the Charge relay in the catalytic mechanism. 7 residues coordinate UDP-alpha-D-glucose: Thr-151, Gln-366, His-381, Trp-384, Asn-385, Ser-386, and Glu-389. Ala-404 serves as a coordination point for an anthocyanidin. Residues Glu-405 and Gln-406 each coordinate UDP-alpha-D-glucose.

Belongs to the UDP-glycosyltransferase family. In terms of tissue distribution, expressed in roots.

The catalysed reaction is 7-deoxyloganetin + UDP-alpha-D-glucose = 7-deoxyloganin + UDP + H(+). Iridoid glucosyltransferase acting exclusively on 7-deoxyloganetin. No activity with 7-deoxyloganetic acid. The protein is 7-deoxyloganetin glucosyltransferase (UGT85A23) of Catharanthus roseus (Madagascar periwinkle).